We begin with the raw amino-acid sequence, 89 residues long: Small ribosomal subunit protein uS15 (89 aa).

Belongs to the universal ribosomal protein uS15 family. In terms of assembly, part of the 30S ribosomal subunit. Forms a bridge to the 50S subunit in the 70S ribosome, contacting the 23S rRNA.

In terms of biological role, one of the primary rRNA binding proteins, it binds directly to 16S rRNA where it helps nucleate assembly of the platform of the 30S subunit by binding and bridging several RNA helices of the 16S rRNA. Its function is as follows. Forms an intersubunit bridge (bridge B4) with the 23S rRNA of the 50S subunit in the ribosome. In Prosthecochloris aestuarii (strain DSM 271 / SK 413), this protein is Small ribosomal subunit protein uS15.